Reading from the N-terminus, the 100-residue chain is Urease subunit gamma (100 aa).

Belongs to the urease gamma subunit family. Heterotrimer of UreA (gamma), UreB (beta) and UreC (alpha) subunits. Three heterotrimers associate to form the active enzyme.

The protein localises to the cytoplasm. It carries out the reaction urea + 2 H2O + H(+) = hydrogencarbonate + 2 NH4(+). Its pathway is nitrogen metabolism; urea degradation; CO(2) and NH(3) from urea (urease route): step 1/1. This Bacillus cereus (strain ATCC 10987 / NRS 248) protein is Urease subunit gamma.